The sequence spans 467 residues: Squalene synthase (467 aa).

Belongs to the phytoene/squalene synthase family. Requires Mg(2+) as cofactor.

The enzyme catalyses 2 (2E,6E)-farnesyl diphosphate + NADPH + H(+) = squalene + 2 diphosphate + NADP(+). It carries out the reaction 2 (2E,6E)-farnesyl diphosphate + NADH + H(+) = squalene + 2 diphosphate + NAD(+). It functions in the pathway terpene metabolism; lanosterol biosynthesis; lanosterol from farnesyl diphosphate: step 1/3. Functionally, squalene synthase; part of the third module of ergosterol biosynthesis pathway that includes the late steps of the pathway. The third module or late pathway involves the ergosterol synthesis itself through consecutive reactions that mainly occur in the endoplasmic reticulum (ER) membrane. Firstly, the squalene synthase SQS catalyzes the condensation of 2 farnesyl pyrophosphate moieties to form squalene, which is the precursor of all steroids. Secondly, the squalene epoxidase catalyzes the stereospecific oxidation of squalene to (S)-2,3-epoxysqualene, which is considered to be a rate-limiting enzyme in steroid biosynthesis. Then, the lanosterol synthase LS catalyzes the cyclization of (S)-2,3 oxidosqualene to lanosterol, a reaction that forms the sterol core. In the next steps, lanosterol is transformed to ergosterol via a complex process involving various demethylation, reduction and desaturation reactions. Lanosterol is also an intermediate in the biosynthesis of triterpenes such as ganoderic acids (GA), a group of highly oxygenated lanostane-type triterpenoids which are well recognized as a main group of unique bioactive compounds in the medicinal mushroom Ganoderma lucidum. This Ganoderma lucidum (Ling zhi medicinal fungus) protein is Squalene synthase.